Here is an 888-residue protein sequence, read N- to C-terminus: Inactive deaminase YJL070C (888 aa).

The segment at 1–42 (MQAVERRPSLLFDEYQNSVTKPNETKNKEARVLSENDGDVSP) is disordered. The residue at position 9 (Ser-9) is a Phosphoserine. Residues 23–34 (NETKNKEARVLS) show a composition bias toward basic and acidic residues. Ser-41, Ser-178, and Ser-180 each carry phosphoserine.

The protein belongs to the metallo-dependent hydrolases superfamily. Adenosine and AMP deaminases family.

The polypeptide is Inactive deaminase YJL070C (Saccharomyces cerevisiae (strain ATCC 204508 / S288c) (Baker's yeast)).